We begin with the raw amino-acid sequence, 160 residues long: SsrA-binding protein (160 aa).

It belongs to the SmpB family.

It localises to the cytoplasm. Its function is as follows. Required for rescue of stalled ribosomes mediated by trans-translation. Binds to transfer-messenger RNA (tmRNA), required for stable association of tmRNA with ribosomes. tmRNA and SmpB together mimic tRNA shape, replacing the anticodon stem-loop with SmpB. tmRNA is encoded by the ssrA gene; the 2 termini fold to resemble tRNA(Ala) and it encodes a 'tag peptide', a short internal open reading frame. During trans-translation Ala-aminoacylated tmRNA acts like a tRNA, entering the A-site of stalled ribosomes, displacing the stalled mRNA. The ribosome then switches to translate the ORF on the tmRNA; the nascent peptide is terminated with the 'tag peptide' encoded by the tmRNA and targeted for degradation. The ribosome is freed to recommence translation, which seems to be the essential function of trans-translation. The polypeptide is SsrA-binding protein (Sodalis glossinidius (strain morsitans)).